Consider the following 420-residue polypeptide: Exodeoxyribonuclease 7 large subunit (420 aa).

The protein belongs to the XseA family. As to quaternary structure, heterooligomer composed of large and small subunits.

It localises to the cytoplasm. It catalyses the reaction Exonucleolytic cleavage in either 5'- to 3'- or 3'- to 5'-direction to yield nucleoside 5'-phosphates.. Bidirectionally degrades single-stranded DNA into large acid-insoluble oligonucleotides, which are then degraded further into small acid-soluble oligonucleotides. This Helicobacter pylori (strain Shi470) protein is Exodeoxyribonuclease 7 large subunit.